Consider the following 481-residue polypeptide: Tripartite motif-containing protein 10 (481 aa).

The RING-type zinc finger occupies 16-61 (CPICQGTLREPVTIDCGHNFCRACLTRYCEIPGPDLEESPTCPLCK). The segment at 94–135 (GEEDVCQEHGEKIYFFCEDDEMQLCVVCREAGEHATHTMRFL) adopts a B box-type zinc-finger fold. Zn(2+)-binding residues include cysteine 99, histidine 102, cysteine 121, and histidine 127. Residues 150-177 (LKCLRKEREEIQEIQSRENKRMQVLLTQ) are a coiled coil. The 190-residue stretch at 292 to 481 (REMKMFLEKL…GRGSSFSLSS (190 aa)) folds into the B30.2/SPRY domain.

It belongs to the TRIM/RBCC family. As to quaternary structure, interacts with IFNAR1; this interaction prevents association of IFNAR1 with TYK2.

Its subcellular location is the cytoplasm. Functionally, E3 ligase that plays an essential role in the differentiation and survival of terminal erythroid cells. May directly bind to PTEN and promote its ubiquitination, resulting in its proteasomal degradation and activation of hypertrophic signaling. In addition, plays a role in immune response regulation by repressing the phosphorylation of STAT1 and STAT2 in the interferon/JAK/STAT signaling pathway independent of its E3 ligase activity. Mechanistically, interacts with the intracellular domain of IFNAR1 and thereby inhibits the association between TYK2 and IFNAR1. This chain is Tripartite motif-containing protein 10 (TRIM10), found in Homo sapiens (Human).